Reading from the N-terminus, the 119-residue chain is MARVKRGVTAHAKHKKVYKAAKGFRGRRKNTIRAAKAAVDKAGQYAFRDRKRKKRTFRALWIQRINAAVRPFGMTYSVFINGLSKSGIVVDRKVLSDLAITEPAAFQAIAEKAKAALAA.

Belongs to the bacterial ribosomal protein bL20 family.

Functionally, binds directly to 23S ribosomal RNA and is necessary for the in vitro assembly process of the 50S ribosomal subunit. It is not involved in the protein synthesizing functions of that subunit. The polypeptide is Large ribosomal subunit protein bL20 (Rhodopseudomonas palustris (strain HaA2)).